We begin with the raw amino-acid sequence, 84 residues long: Chymotrypsin inhibitor Ani s 6 (84 aa).

The N-terminal stretch at 1–22 (MFQSTFFLVLMVCVATARFANK) is a signal peptide. Disulfide bonds link Cys-25–Cys-58, Cys-34–Cys-54, Cys-38–Cys-50, Cys-42–Cys-79, and Cys-60–Cys-73. Positions 25-79 (CPPNEEYNECGNPCQEKCDNGEPVICTYQCEHRCFCKQGYVRLTEDGECVPEEFC) constitute a TIL domain.

This sequence belongs to the serine protease inhibitor-like (TIL domain-containing) family.

It localises to the secreted. Inhibits alpha-chymotrypsin, but not trypsin. The sequence is that of Chymotrypsin inhibitor Ani s 6 from Anisakis simplex (Herring worm).